Here is a 535-residue protein sequence, read N- to C-terminus: MLSLLNPKAESIQRAQALQVNISAAIGLQDVLKSNLGPTGTTKMLVDGAGAIKLTKDGKVLLTEMQIQNPTASCIAKAATAQDDATGDGTTSVCLLVGELLKQAELYIREGLHPSLISDGFNLAKNEALTFLDSFKTDFEVDREVLLNVAKTSLSTKISSKVVESLAPAVVDAILTIRRPDEPIDLHMVEIMKMQNRSASDTQLIRGLLLDHGARHPDMPKQVKNAYILILNVSLEYEKSEINSGFFYSTSEQRERLVESERKFVDNKLRKIVELKKEVCERDPTANFVIINQKGIDPLSLDVLAKNGIMALRRAKRRNMERLQLACGGVAQNSVDDLNPEVLGWAGSVYERTLGEEKYTFVEDVKDPKSATILIHGPNTYTIQQIQDATRDGLRAVKNAVEDNCLIVGAGAFEVACAAHLRNKFAAKEVKGKAKMGVYAYADALLIIPKTLAANSSYDTQDAIVALQEEASEGYKVGLDLKTGMPFDPEVEGIYDNYRVIRHMLHSATVIASNLISVDQILRAGRSSLKEGPPQ.

The protein belongs to the TCP-1 chaperonin family. In terms of assembly, heterooligomeric complex of about 850 to 900 kDa that forms two stacked rings, 12 to 16 nm in diameter.

The protein resides in the cytoplasm. Functionally, molecular chaperone; assists the folding of proteins upon ATP hydrolysis. Known to play a role, in vitro, in the folding of actin and tubulin. This chain is T-complex protein 1 subunit zeta (cct6), found in Schizosaccharomyces pombe (strain 972 / ATCC 24843) (Fission yeast).